The chain runs to 204 residues: Proteasome subunit beta 1 (204 aa).

A propeptide spans 1 to 9 (removed in mature form; by autocatalysis); it reads MSYEYGTGA. Catalysis depends on threonine 10, which acts as the Nucleophile.

Belongs to the peptidase T1B family. As to quaternary structure, the 20S proteasome core is composed of 14 alpha and 14 beta subunits that assemble into four stacked heptameric rings, resulting in a barrel-shaped structure. The two inner rings, each composed of seven catalytic beta subunits, are sandwiched by two outer rings, each composed of seven alpha subunits. The catalytic chamber with the active sites is on the inside of the barrel. Has a gated structure, the ends of the cylinder being occluded by the N-termini of the alpha-subunits. Is capped at one or both ends by the proteasome regulatory ATPase, PAN.

Its subcellular location is the cytoplasm. The enzyme catalyses Cleavage of peptide bonds with very broad specificity.. The formation of the proteasomal ATPase PAN-20S proteasome complex, via the docking of the C-termini of PAN into the intersubunit pockets in the alpha-rings, triggers opening of the gate for substrate entry. Interconversion between the open-gate and close-gate conformations leads to a dynamic regulation of the 20S proteasome proteolysis activity. Its function is as follows. Component of the proteasome core, a large protease complex with broad specificity involved in protein degradation. This Hyperthermus butylicus (strain DSM 5456 / JCM 9403 / PLM1-5) protein is Proteasome subunit beta 1.